The sequence spans 448 residues: Signal recognition particle protein (448 aa).

Residues 101 to 108, 182 to 186, and 240 to 243 contribute to the GTP site; these read GLQGSGKT, DSAGR, and SKFD.

Belongs to the GTP-binding SRP family. SRP54 subfamily. In terms of assembly, part of the signal recognition particle protein translocation system, which is composed of SRP and FtsY. SRP is a ribonucleoprotein composed of Ffh and a 4.5S RNA molecule.

Its subcellular location is the cytoplasm. The catalysed reaction is GTP + H2O = GDP + phosphate + H(+). In terms of biological role, involved in targeting and insertion of nascent membrane proteins into the cytoplasmic membrane. Binds to the hydrophobic signal sequence of the ribosome-nascent chain (RNC) as it emerges from the ribosomes. The SRP-RNC complex is then targeted to the cytoplasmic membrane where it interacts with the SRP receptor FtsY. Interaction with FtsY leads to the transfer of the RNC complex to the Sec translocase for insertion into the membrane, the hydrolysis of GTP by both Ffh and FtsY, and the dissociation of the SRP-FtsY complex into the individual components. This Helicobacter pylori (strain ATCC 700392 / 26695) (Campylobacter pylori) protein is Signal recognition particle protein.